The sequence spans 160 residues: MSKEVIVESFELDHTIVKAPYVRLIGEESGPKGDVISNFDIRLVQPNEDSIPTAGLHTIEHLLAMLIRKRIDGMIDCSPFGCRTGFHMIMWGRHTPSEIAQVIKSCLEEIAETTTWEDVPGTTIESCGNYKDHSLFSAKEWAKLILKQGISDNAFERHVI.

Fe cation contacts are provided by His57, His61, and Cys127.

This sequence belongs to the LuxS family. Homodimer. The cofactor is Fe cation.

The catalysed reaction is S-(5-deoxy-D-ribos-5-yl)-L-homocysteine = (S)-4,5-dihydroxypentane-2,3-dione + L-homocysteine. Functionally, involved in the synthesis of autoinducer 2 (AI-2) which is secreted by bacteria and is used to communicate both the cell density and the metabolic potential of the environment. The regulation of gene expression in response to changes in cell density is called quorum sensing. Catalyzes the transformation of S-ribosylhomocysteine (RHC) to homocysteine (HC) and 4,5-dihydroxy-2,3-pentadione (DPD). The polypeptide is S-ribosylhomocysteine lyase (Streptococcus gordonii (strain Challis / ATCC 35105 / BCRC 15272 / CH1 / DL1 / V288)).